Consider the following 488-residue polypeptide: Protein nucleotidyltransferase YdiU (488 aa).

ATP is bound by residues G90, G92, R93, K113, D125, G126, R176, and R183. The active-site Proton acceptor is D252. Residues N253 and D262 each coordinate Mg(2+). Position 262 (D262) interacts with ATP.

This sequence belongs to the SELO family. It depends on Mg(2+) as a cofactor. The cofactor is Mn(2+).

It carries out the reaction L-seryl-[protein] + ATP = 3-O-(5'-adenylyl)-L-seryl-[protein] + diphosphate. The catalysed reaction is L-threonyl-[protein] + ATP = 3-O-(5'-adenylyl)-L-threonyl-[protein] + diphosphate. It catalyses the reaction L-tyrosyl-[protein] + ATP = O-(5'-adenylyl)-L-tyrosyl-[protein] + diphosphate. The enzyme catalyses L-histidyl-[protein] + UTP = N(tele)-(5'-uridylyl)-L-histidyl-[protein] + diphosphate. It carries out the reaction L-seryl-[protein] + UTP = O-(5'-uridylyl)-L-seryl-[protein] + diphosphate. The catalysed reaction is L-tyrosyl-[protein] + UTP = O-(5'-uridylyl)-L-tyrosyl-[protein] + diphosphate. Its function is as follows. Nucleotidyltransferase involved in the post-translational modification of proteins. It can catalyze the addition of adenosine monophosphate (AMP) or uridine monophosphate (UMP) to a protein, resulting in modifications known as AMPylation and UMPylation. The protein is Protein nucleotidyltransferase YdiU of Thiobacillus denitrificans (strain ATCC 25259 / T1).